Reading from the N-terminus, the 253-residue chain is LexA repressor (253 aa).

Residues 1-33 form a disordered region; the sequence is MTSQGRGTRRGGARGNVRAFPENPADAAGLTPR. The H-T-H motif DNA-binding region spans 54–74; the sequence is VREIGEAVGLTSTSSVAHQLK. Catalysis depends on for autocatalytic cleavage activity residues Ser-177 and Lys-214.

This sequence belongs to the peptidase S24 family. Homodimer.

The enzyme catalyses Hydrolysis of Ala-|-Gly bond in repressor LexA.. Functionally, represses a number of genes involved in the response to DNA damage (SOS response), including recA and lexA. In the presence of single-stranded DNA, RecA interacts with LexA causing an autocatalytic cleavage which disrupts the DNA-binding part of LexA, leading to derepression of the SOS regulon and eventually DNA repair. This is LexA repressor from Frankia alni (strain DSM 45986 / CECT 9034 / ACN14a).